Consider the following 20-residue polypeptide: Non-secretory ribonuclease (20 aa).

Histidine 16 (proton acceptor) is an active-site residue.

Belongs to the pancreatic ribonuclease family. In terms of assembly, interacts with and forms a tight 1:1 complex with RNH1. Dimerization of two such complexes may occur.

The protein localises to the lysosome. It localises to the cytoplasmic granule. It catalyses the reaction an [RNA] containing cytidine + H2O = an [RNA]-3'-cytidine-3'-phosphate + a 5'-hydroxy-ribonucleotide-3'-[RNA].. It carries out the reaction an [RNA] containing uridine + H2O = an [RNA]-3'-uridine-3'-phosphate + a 5'-hydroxy-ribonucleotide-3'-[RNA].. In terms of biological role, this is a non-secretory ribonuclease. It is a pyrimidine specific nuclease with a slight preference for U. Cytotoxin and helminthotoxin. Possesses a wide variety of biological activities. This Sus scrofa (Pig) protein is Non-secretory ribonuclease (RNASE2).